The following is a 493-amino-acid chain: Ketol-acid reductoisomerase (NADP(+)) (493 aa).

The KARI N-terminal Rossmann domain occupies 14 to 208 (LDQLGRCRFM…GGDRAGVLES (195 aa)). NADP(+) contacts are provided by residues 45-48 (CGAQ), Arg-68, Arg-76, Ser-78, and 108-110 (DKQ). His-132 is a catalytic residue. Residue Gly-158 coordinates NADP(+). 2 KARI C-terminal knotted domains span residues 209–345 (SFVA…SPKA) and 346–486 (DGIK…MTDM). Mg(2+)-binding residues include Asp-217, Glu-221, Glu-390, and Glu-394. Ser-415 contacts substrate.

The protein belongs to the ketol-acid reductoisomerase family. Mg(2+) is required as a cofactor.

It carries out the reaction (2R)-2,3-dihydroxy-3-methylbutanoate + NADP(+) = (2S)-2-acetolactate + NADPH + H(+). The catalysed reaction is (2R,3R)-2,3-dihydroxy-3-methylpentanoate + NADP(+) = (S)-2-ethyl-2-hydroxy-3-oxobutanoate + NADPH + H(+). It participates in amino-acid biosynthesis; L-isoleucine biosynthesis; L-isoleucine from 2-oxobutanoate: step 2/4. The protein operates within amino-acid biosynthesis; L-valine biosynthesis; L-valine from pyruvate: step 2/4. Functionally, involved in the biosynthesis of branched-chain amino acids (BCAA). Catalyzes an alkyl-migration followed by a ketol-acid reduction of (S)-2-acetolactate (S2AL) to yield (R)-2,3-dihydroxy-isovalerate. In the isomerase reaction, S2AL is rearranged via a Mg-dependent methyl migration to produce 3-hydroxy-3-methyl-2-ketobutyrate (HMKB). In the reductase reaction, this 2-ketoacid undergoes a metal-dependent reduction by NADPH to yield (R)-2,3-dihydroxy-isovalerate. In Actinobacillus pleuropneumoniae serotype 3 (strain JL03), this protein is Ketol-acid reductoisomerase (NADP(+)).